We begin with the raw amino-acid sequence, 508 residues long: Steroid 17-alpha-hydroxylase/17,20 lyase (508 aa).

Cysteine 442 contributes to the heme binding site.

It belongs to the cytochrome P450 family. It depends on heme as a cofactor.

Its subcellular location is the endoplasmic reticulum membrane. The protein resides in the microsome membrane. It catalyses the reaction a C21-steroid + reduced [NADPH--hemoprotein reductase] + O2 = a 17alpha-hydroxy-C21-steroid + oxidized [NADPH--hemoprotein reductase] + H2O + H(+). The enzyme catalyses progesterone + reduced [NADPH--hemoprotein reductase] + O2 = 17alpha-hydroxyprogesterone + oxidized [NADPH--hemoprotein reductase] + H2O + H(+). The catalysed reaction is pregnenolone + reduced [NADPH--hemoprotein reductase] + O2 = 17alpha-hydroxypregnenolone + oxidized [NADPH--hemoprotein reductase] + H2O + H(+). It carries out the reaction 17alpha-hydroxyprogesterone + reduced [NADPH--hemoprotein reductase] + O2 = androst-4-ene-3,17-dione + acetate + oxidized [NADPH--hemoprotein reductase] + H2O + 2 H(+). It catalyses the reaction 17alpha-hydroxyprogesterone + reduced [NADPH--hemoprotein reductase] + O2 = 16alpha,17alpha-dihydroxyprogesterone + oxidized [NADPH--hemoprotein reductase] + H2O + H(+). The enzyme catalyses 16alpha,17alpha-dihydroxyprogesterone + reduced [NADPH--hemoprotein reductase] + O2 = 6beta,16alpha,17alpha-trihydroxyprogesterone + oxidized [NADPH--hemoprotein reductase] + H2O + H(+). The catalysed reaction is 17alpha-hydroxypregnenolone + reduced [NADPH--hemoprotein reductase] + O2 = 3beta-hydroxyandrost-5-en-17-one + acetate + oxidized [NADPH--hemoprotein reductase] + H2O + 2 H(+). It carries out the reaction 16alpha,17alpha-dihydroxypregnenolone + reduced [NADPH--hemoprotein reductase] + O2 = 3beta,16alpha-dihydroxy-androst-5-en-17-one + acetate + oxidized [NADPH--hemoprotein reductase] + H2O + 2 H(+). It catalyses the reaction 3beta-hydroxyandrost-5-en-17-one + reduced [NADPH--hemoprotein reductase] + O2 = 3beta,16alpha-dihydroxy-androst-5-en-17-one + oxidized [NADPH--hemoprotein reductase] + H2O + H(+). The enzyme catalyses androst-4-ene-3,17-dione + reduced [NADPH--hemoprotein reductase] + O2 = 16alpha-hydroxyandrost-4-ene-3,17-dione + oxidized [NADPH--hemoprotein reductase] + H2O + H(+). It participates in steroid hormone biosynthesis. It functions in the pathway steroid biosynthesis; glucocorticoid biosynthesis. Regulated predominantly by intracellular cAMP levels. The 17,20-lyase activity is stimulated by cytochrome b5, which acts as an allosteric effector increasing the Vmax of the lyase activity. Its function is as follows. A cytochrome P450 monooxygenase involved in corticoid and androgen biosynthesis. Catalyzes 17-alpha hydroxylation of C21 steroids, which is common for both pathways. A second oxidative step, required only for androgen synthesis, involves an acyl-carbon cleavage. The 17-alpha hydroxy intermediates, as part of adrenal glucocorticoids biosynthesis pathway, are precursors of cortisol. Hydroxylates steroid hormones, pregnenolone and progesterone to form 17-alpha hydroxy metabolites, followed by the cleavage of the C17-C20 bond to form C19 steroids, dehydroepiandrosterone (DHEA) and androstenedione. Has 16-alpha hydroxylase activity. Catalyzes 16-alpha hydroxylation of 17-alpha hydroxy pregnenolone, followed by the cleavage of the C17-C20 bond to form 16-alpha-hydroxy DHEA. Also 16-alpha hydroxylates androgens, relevant for estriol synthesis. Mechanistically, uses molecular oxygen inserting one oxygen atom into a substrate, and reducing the second into a water molecule, with two electrons provided by NADPH via cytochrome P450 reductase (CPR; NADPH-ferrihemoprotein reductase). In Equus caballus (Horse), this protein is Steroid 17-alpha-hydroxylase/17,20 lyase (CYP17A1).